The sequence spans 312 residues: Protoheme IX farnesyltransferase (312 aa).

A run of 8 helical transmembrane segments spans residues 33 to 53, 54 to 74, 105 to 125, 126 to 146, 154 to 174, 181 to 201, 243 to 263, and 291 to 311; these read VMLL…VSIN, PLYG…AGAL, FIFG…FVNW, FAAL…TIWL, IVIG…AATG, FLLF…LSLF, IIGF…IIFI, and FYLA…CFII.

This sequence belongs to the UbiA prenyltransferase family. Protoheme IX farnesyltransferase subfamily.

It is found in the cell inner membrane. The catalysed reaction is heme b + (2E,6E)-farnesyl diphosphate + H2O = Fe(II)-heme o + diphosphate. It participates in porphyrin-containing compound metabolism; heme O biosynthesis; heme O from protoheme: step 1/1. Converts heme B (protoheme IX) to heme O by substitution of the vinyl group on carbon 2 of heme B porphyrin ring with a hydroxyethyl farnesyl side group. This chain is Protoheme IX farnesyltransferase, found in Bartonella henselae (strain ATCC 49882 / DSM 28221 / CCUG 30454 / Houston 1) (Rochalimaea henselae).